The sequence spans 472 residues: 3-isopropylmalate dehydratase large subunit (472 aa).

A disordered region spans residues 61-80 (TPDHNVPTTQKERASGVEGI). C353, C414, and C417 together coordinate [4Fe-4S] cluster.

This sequence belongs to the aconitase/IPM isomerase family. LeuC type 1 subfamily. As to quaternary structure, heterodimer of LeuC and LeuD. The cofactor is [4Fe-4S] cluster.

The catalysed reaction is (2R,3S)-3-isopropylmalate = (2S)-2-isopropylmalate. Its pathway is amino-acid biosynthesis; L-leucine biosynthesis; L-leucine from 3-methyl-2-oxobutanoate: step 2/4. Functionally, catalyzes the isomerization between 2-isopropylmalate and 3-isopropylmalate, via the formation of 2-isopropylmaleate. This chain is 3-isopropylmalate dehydratase large subunit, found in Saccharophagus degradans (strain 2-40 / ATCC 43961 / DSM 17024).